We begin with the raw amino-acid sequence, 24 residues long: Calcium-binding shell glycoprotein P50 (24 aa).

Residues Lys1 to Asn24 form a disordered region.

Glycosylated. In terms of tissue distribution, nacreous and prismatic layers of the shell.

Functionally, calcium-binding. The protein is Calcium-binding shell glycoprotein P50 of Unio pictorum (Painter's mussel).